Reading from the N-terminus, the 639-residue chain is Putative cyclic beta-1,2-glucan modification protein (639 aa).

The next 6 helical transmembrane spans lie at alanine 34 to tryptophan 54, proline 69 to glycine 89, leucine 96 to leucine 116, tryptophan 144 to leucine 164, phenylalanine 185 to isoleucine 205, and phenylalanine 227 to methionine 247.

It localises to the cell membrane. This chain is Putative cyclic beta-1,2-glucan modification protein (cgmA), found in Rhizobium meliloti (strain 1021) (Ensifer meliloti).